The sequence spans 176 residues: MTGNIDQLMKDMARDLLGEDVIDVLSFLLDNKTELTDEEMANKLNVKVNEVRKKLYALAEHGLVSYRRTRDKETGWYVYYWKANVDQINELLLSRKREILNKLKARLEYETNNEFYICPEDKTKYTFEEAFENEFKCPKCGVQLVYYDSAKMREFLERKIKEIEEEIARETKVGSS.

The region spanning 5 to 89 (IDQLMKDMAR…YWKANVDQIN (85 aa)) is the HTH TFE/IIEalpha-type domain.

Belongs to the TFE family. In terms of assembly, monomer. Interaction with RNA polymerase subunits RpoF and RpoE is necessary for Tfe stimulatory transcription activity. Able to interact with Tbp and RNA polymerase in the absence of DNA promoter. Interacts both with the preinitiation and elongation complexes.

In terms of biological role, transcription factor that plays a role in the activation of archaeal genes transcribed by RNA polymerase. Facilitates transcription initiation by enhancing TATA-box recognition by TATA-box-binding protein (Tbp), and transcription factor B (Tfb) and RNA polymerase recruitment. Not absolutely required for transcription in vitro, but particularly important in cases where Tbp or Tfb function is not optimal. It dynamically alters the nucleic acid-binding properties of RNA polymerases by stabilizing the initiation complex and destabilizing elongation complexes. Seems to translocate with the RNA polymerase following initiation and acts by binding to the non template strand of the transcription bubble in elongation complexes. The protein is Transcription factor E of Metallosphaera sedula (strain ATCC 51363 / DSM 5348 / JCM 9185 / NBRC 15509 / TH2).